We begin with the raw amino-acid sequence, 295 residues long: Light-independent protochlorophyllide reductase iron-sulfur ATP-binding protein (295 aa).

Residues 39–44 (GIGKST) and Lys-68 contribute to the ATP site. Residue Ser-43 participates in Mg(2+) binding. Residues Cys-124 and Cys-158 each contribute to the [4Fe-4S] cluster site. 209-210 (NR) is an ATP binding site.

The protein belongs to the NifH/BchL/ChlL family. Homodimer. Protochlorophyllide reductase is composed of three subunits; ChlL, ChlN and ChlB. The cofactor is [4Fe-4S] cluster.

The enzyme catalyses chlorophyllide a + oxidized 2[4Fe-4S]-[ferredoxin] + 2 ADP + 2 phosphate = protochlorophyllide a + reduced 2[4Fe-4S]-[ferredoxin] + 2 ATP + 2 H2O. The protein operates within porphyrin-containing compound metabolism; chlorophyll biosynthesis (light-independent). Its function is as follows. Component of the dark-operative protochlorophyllide reductase (DPOR) that uses Mg-ATP and reduced ferredoxin to reduce ring D of protochlorophyllide (Pchlide) to form chlorophyllide a (Chlide). This reaction is light-independent. The L component serves as a unique electron donor to the NB-component of the complex, and binds Mg-ATP. This is Light-independent protochlorophyllide reductase iron-sulfur ATP-binding protein from Prochlorococcus marinus (strain MIT 9312).